Reading from the N-terminus, the 797-residue chain is RAS guanyl-releasing protein 1 (797 aa).

The span at 1-12 (MGTLGKAREAPR) shows a compositional bias: basic and acidic residues. Positions 1-23 (MGTLGKAREAPRKPSHGCRAASK) are disordered. The region spanning 53-176 (LGHLAKGASL…RLIDTTQINA (124 aa)) is the N-terminal Ras-GEF domain. Residues 57–110 (AKGASLDDLIDSCIQSFDADGNLCRSNQLLQVMLTMHRIVISSAELLQKVITLY) are ras exchanger motif region; required for transforming activity. Thr-184 carries the phosphothreonine; by PKC modification. In terms of domain architecture, Ras-GEF spans 205-436 (EPEELSEHLT…YELSYAREPR (232 aa)). EF-hand domains follow at residues 470 to 505 (HVQR…FPFS) and 506 to 532 (FCVM…ASSI). Ca(2+)-binding residues include Asp-483, Asp-485, Asp-487, Tyr-489, and Glu-494. The segment at 541-591 (PHNFQETTYLKPTFCDNCAGFLWGVIKQGYRCKDCGMNCHKQCKDLVVFEC) adopts a Phorbol-ester/DAG-type zinc-finger fold. A disordered region spans residues 673–694 (TQTESQPWIGSEGPSGPFVLSS). The tract at residues 686–694 (PSGPFVLSS) is suppress the PT region-mediated translocation to plasma membrane. The PT region; mediates the BCR-dependent translocation to plasma membrane stretch occupies residues 718–797 (LVRKRAFVKW…LAQMEQGDCS (80 aa)). Residues 746–786 (PTYQELEQEINTLKADNDALKIQLKYAQKKIESLQLEKSNH) are a coiled coil.

The protein belongs to the RASGRP family. Homodimer. Forms a signaling complex with DGKZ and HRAS. Interacts with F-actin. Interacts with SKAP1. Expressed in brain with higher expression in cerebellum, cerebral cortex and amygdala. Expressed in the hematopoietic system. Expressed in T-cells (at protein level). Expressed in NK cells (at protein level).

Its subcellular location is the cytoplasm. The protein resides in the cytosol. It is found in the cell membrane. It localises to the golgi apparatus membrane. The protein localises to the endoplasmic reticulum membrane. Its activity is regulated as follows. Autoinhibited. Activated by diacylglycerol and calcium binding, which induces a conformational change releasing the autoinhibitory state. Regulated by DGKA. Regulated by DGKZ. Regulated by PLC gamma and F-actin polymerization. In terms of biological role, functions as a calcium- and diacylglycerol (DAG)-regulated nucleotide exchange factor specifically activating Ras through the exchange of bound GDP for GTP. Activates the Erk/MAP kinase cascade. Regulates T-cell/B-cell development, homeostasis and differentiation by coupling T-lymphocyte/B-lymphocyte antigen receptors to Ras. Regulates NK cell cytotoxicity and ITAM-dependent cytokine production by activation of Ras-mediated ERK and JNK pathways. Functions in mast cell degranulation and cytokine secretion, regulating FcERI-evoked allergic responses. May also function in differentiation of other cell types. This chain is RAS guanyl-releasing protein 1 (RASGRP1), found in Homo sapiens (Human).